The chain runs to 861 residues: Linoleate 9S-lipoxygenase 2 (861 aa).

Residues 29–160 (NALDFTDLAG…RYKSDRIFFV (132 aa)) form the PLAT domain. The Lipoxygenase domain occupies 163–861 (PYLPSKTPEL…GKGIPNSVSI (699 aa)). The segment at 212–246 (EGKENVRTTLGGSAEYPYPRRGRTGRPPTRTDPKS) is disordered. Fe cation is bound by residues H522, H527, H713, N717, and I861.

Belongs to the lipoxygenase family. As to quaternary structure, monomer. The cofactor is Fe cation. Highly expressed in tubers and roots. Detected in flower buds and leaves.

Its subcellular location is the cytoplasm. It carries out the reaction (9Z,12Z)-octadecadienoate + O2 = (9S)-hydroperoxy-(10E,12Z)-octadecadienoate. The protein operates within lipid metabolism; oxylipin biosynthesis. Functionally, plant lipoxygenases may be involved in a number of diverse aspects of plant physiology including growth and development, pest resistance, and senescence or responses to wounding. Catalyzes the hydroperoxidation of lipids containing a cis,cis-1,4-pentadiene structure. Linoleic acid is the preferred substrate, but is also active with linolenic and arachidonic acids. This Solanum tuberosum (Potato) protein is Linoleate 9S-lipoxygenase 2 (LOX1.2).